The sequence spans 520 residues: Ribonuclease Y (520 aa).

At 1–3 (MTP) the chain is on the extracellular side. The helical transmembrane segment at 4–24 (IMMVLISILLILLGLVVGYFV) threads the bilayer. Topologically, residues 25–520 (RKTIAEAKIA…RETRAVEYAK (496 aa)) are cytoplasmic. Positions 29–141 (AEAKIAGARG…KVDEMIRMQQ (113 aa)) form a coiled coil. The 64-residue stretch at 210–273 (TVSVVNLPND…ETARIALDKL (64 aa)) folds into the KH domain. The HD domain maps to 336 to 429 (VLKHSMEVAF…VAAADALSAA (94 aa)).

Belongs to the RNase Y family. Homodimer. Component of a possible RNA degradosome complex composed of rny, rnjA, rnjB, pnp, pfkA and eno (although rnjA and rnjB's presence is unclear). Interacts with RNA helicase CshA which may also be a member of the RNA degradosome complex. Interacts with full-length dynamin-like protein DynA. It depends on Mg(2+) as a cofactor. The cofactor is Mn(2+). Requires Zn(2+) as cofactor.

It localises to the cell membrane. Shows preference for transcripts carrying a monophosphate group at the 5' end. Functionally, endoribonuclease that initiates mRNA decay. Initiates the decay of all SAM-dependent riboswitches, such as yitJ riboswitch. Involved in processing of the gapA operon mRNA, it cleaves between cggR and gapA. Is also the decay-initiating endonuclease for rpsO mRNA. Involved in degradation of type I toxin-antitoxin system bsrG/SR4 RNAs and a minor role in degradation of type I toxin-antitoxin system bsrE/SR5 degradation. The sequence is that of Ribonuclease Y (rny) from Bacillus subtilis (strain 168).